We begin with the raw amino-acid sequence, 290 residues long: Microtubule-associated protein P320 (290 aa).

Repeats lie at residues 1–38 (SEYR…PIDP), 39–76 (SEYR…PIDP), 77–114 (SEYR…PIDP), 115–152 (SEYR…PIDP), 153–190 (SEYR…PIDP), 191–228 (SEYR…PIDP), 229–266 (SEYR…PIDP), and 267–290 (SEYR…DESH). A disordered region spans residues 251–290 (SHFLTTTHEAYKPIDPSEYRQKRTVGEEVTTDMRHVDESH). Residues 259-290 (EAYKPIDPSEYRQKRTVGEEVTTDMRHVDESH) show a composition bias toward basic and acidic residues.

Its subcellular location is the cytoplasm. The protein localises to the cytoskeleton. In Trypanosoma brucei brucei, this protein is Microtubule-associated protein P320.